We begin with the raw amino-acid sequence, 464 residues long: ATP synthase subunit beta (464 aa).

An ATP-binding site is contributed by Gly-153–Thr-160.

It belongs to the ATPase alpha/beta chains family. As to quaternary structure, F-type ATPases have 2 components, CF(1) - the catalytic core - and CF(0) - the membrane proton channel. CF(1) has five subunits: alpha(3), beta(3), gamma(1), delta(1), epsilon(1). CF(0) has three main subunits: a(1), b(2) and c(9-12). The alpha and beta chains form an alternating ring which encloses part of the gamma chain. CF(1) is attached to CF(0) by a central stalk formed by the gamma and epsilon chains, while a peripheral stalk is formed by the delta and b chains.

The protein resides in the cell membrane. It carries out the reaction ATP + H2O + 4 H(+)(in) = ADP + phosphate + 5 H(+)(out). Produces ATP from ADP in the presence of a proton gradient across the membrane. The catalytic sites are hosted primarily by the beta subunits. This is ATP synthase subunit beta from Alkaliphilus metalliredigens (strain QYMF).